Consider the following 286-residue polypeptide: NAD kinase (286 aa).

Residue aspartate 74 is the Proton acceptor of the active site. Residues 74–75 (DG), 148–149 (ND), aspartate 178, alanine 186, 189–194 (TAYNLS), and glutamine 244 each bind NAD(+).

This sequence belongs to the NAD kinase family. The cofactor is a divalent metal cation.

Its subcellular location is the cytoplasm. The catalysed reaction is NAD(+) + ATP = ADP + NADP(+) + H(+). Functionally, involved in the regulation of the intracellular balance of NAD and NADP, and is a key enzyme in the biosynthesis of NADP. Catalyzes specifically the phosphorylation on 2'-hydroxyl of the adenosine moiety of NAD to yield NADP. The polypeptide is NAD kinase (Campylobacter jejuni (strain RM1221)).